Reading from the N-terminus, the 329-residue chain is 4-hydroxythreonine-4-phosphate dehydrogenase (329 aa).

Substrate-binding residues include histidine 136 and threonine 137. Histidine 166, histidine 211, and histidine 266 together coordinate a divalent metal cation. 3 residues coordinate substrate: lysine 274, asparagine 283, and arginine 292.

It belongs to the PdxA family. Homodimer. Zn(2+) serves as cofactor. Requires Mg(2+) as cofactor. It depends on Co(2+) as a cofactor.

The protein resides in the cytoplasm. The enzyme catalyses 4-(phosphooxy)-L-threonine + NAD(+) = 3-amino-2-oxopropyl phosphate + CO2 + NADH. Its pathway is cofactor biosynthesis; pyridoxine 5'-phosphate biosynthesis; pyridoxine 5'-phosphate from D-erythrose 4-phosphate: step 4/5. Its function is as follows. Catalyzes the NAD(P)-dependent oxidation of 4-(phosphooxy)-L-threonine (HTP) into 2-amino-3-oxo-4-(phosphooxy)butyric acid which spontaneously decarboxylates to form 3-amino-2-oxopropyl phosphate (AHAP). In Shigella boydii serotype 4 (strain Sb227), this protein is 4-hydroxythreonine-4-phosphate dehydrogenase.